Consider the following 270-residue polypeptide: Purine nucleoside phosphorylase BT_4389 (270 aa).

Zn(2+)-binding residues include H79, C124, and H141.

It belongs to the purine nucleoside phosphorylase YfiH/LACC1 family. In terms of assembly, homodimer. The cofactor is Cu(2+). Requires Zn(2+) as cofactor.

It catalyses the reaction adenosine + phosphate = alpha-D-ribose 1-phosphate + adenine. The catalysed reaction is S-methyl-5'-thioadenosine + phosphate = 5-(methylsulfanyl)-alpha-D-ribose 1-phosphate + adenine. It carries out the reaction inosine + phosphate = alpha-D-ribose 1-phosphate + hypoxanthine. The enzyme catalyses adenosine + H2O + H(+) = inosine + NH4(+). Functionally, purine nucleoside enzyme that catalyzes the phosphorolysis of adenosine and inosine nucleosides, yielding D-ribose 1-phosphate and the respective free bases, adenine and hypoxanthine. Also catalyzes the phosphorolysis of S-methyl-5'-thioadenosine into adenine and S-methyl-5-thio-alpha-D-ribose 1-phosphate. Also has adenosine deaminase activity. The polypeptide is Purine nucleoside phosphorylase BT_4389 (Bacteroides thetaiotaomicron (strain ATCC 29148 / DSM 2079 / JCM 5827 / CCUG 10774 / NCTC 10582 / VPI-5482 / E50)).